Consider the following 115-residue polypeptide: DNA-directed RNA polymerase II subunit RPB11-b1 (115 aa).

The protein belongs to the archaeal Rpo11/eukaryotic RPB11/RPC19 RNA polymerase subunit family. As to quaternary structure, component of the RNA polymerase II (Pol II) complex consisting of 12 subunits. Ubiquitously expressed.

Its subcellular location is the nucleus. In terms of biological role, DNA-dependent RNA polymerase catalyzes the transcription of DNA into RNA using the four ribonucleoside triphosphates as substrates. Component of RNA polymerase II which synthesizes mRNA precursors and many functional non-coding RNAs. Pol II is the central component of the basal RNA polymerase II transcription machinery. It is composed of mobile elements that move relative to each other. RPB11 is part of the core element with the central large cleft. The polypeptide is DNA-directed RNA polymerase II subunit RPB11-b1 (POLR2J2) (Homo sapiens (Human)).